Here is a 226-residue protein sequence, read N- to C-terminus: PKHD-type hydroxylase Nwi_0701 (226 aa).

One can recognise a Fe2OG dioxygenase domain in the interval 78-178; sequence KVLPPRFNRY…RLAAFFWTQS (101 aa). Fe cation is bound by residues His96, Asp98, and His159. Arg169 is a binding site for 2-oxoglutarate.

It depends on Fe(2+) as a cofactor. L-ascorbate is required as a cofactor.

This Nitrobacter winogradskyi (strain ATCC 25391 / DSM 10237 / CIP 104748 / NCIMB 11846 / Nb-255) protein is PKHD-type hydroxylase Nwi_0701.